We begin with the raw amino-acid sequence, 323 residues long: tRNA dimethylallyltransferase (323 aa).

12–19 is an ATP binding site; that stretch reads GPTAAGKT. Position 14 to 19 (14 to 19) interacts with substrate; the sequence is TAAGKT. 2 interaction with substrate tRNA regions span residues 37-40 and 161-165; these read DSAL and QRLMR.

Belongs to the IPP transferase family. In terms of assembly, monomer. Requires Mg(2+) as cofactor.

The catalysed reaction is adenosine(37) in tRNA + dimethylallyl diphosphate = N(6)-dimethylallyladenosine(37) in tRNA + diphosphate. Catalyzes the transfer of a dimethylallyl group onto the adenine at position 37 in tRNAs that read codons beginning with uridine, leading to the formation of N6-(dimethylallyl)adenosine (i(6)A). This Pseudomonas paraeruginosa (strain DSM 24068 / PA7) (Pseudomonas aeruginosa (strain PA7)) protein is tRNA dimethylallyltransferase.